A 995-amino-acid chain; its full sequence is ATP-dependent RNA helicase DBP10 (995 aa).

The tract at residues 1–120 is disordered; sequence MAGVQKRKRD…TQTGDDEDDV (120 aa). 2 stretches are compositionally biased toward acidic residues: residues 12–25 and 37–50; these read EDQD…DDIA and SESD…EVEA. Over residues 71-81 the composition is skewed to basic and acidic residues; sequence VNNKKKAENKD. The residue at position 101 (Ser101) is a Phosphoserine. Residues 137–165 carry the Q motif motif; it reads GSFPSFGLSKIVLNNIKRKGFRQPTPIQR. In terms of domain architecture, Helicase ATP-binding spans 168 to 340; that stretch reads IPLILQSRDI…KAGLVNPVLV (173 aa). 181-188 is a binding site for ATP; it reads ARTGSGKT. The short motif at 288-291 is the DEAD box element; it reads DEAD. Disordered regions lie at residues 389–427 and 889–973; these read LQNS…PAAN and GSRE…EQIR. Phosphoserine occurs at positions 398 and 400. Basic residues-rich tracts occupy residues 407–422 and 914–924; these read QKKR…RKQK and VRGKFKHKQMK. The 151-residue stretch at 418–568 folds into the Helicase C-terminal domain; that stretch reads FRKQKMPAAN…PMYDSLVDVM (151 aa). Residues 964–973 show a composition bias toward basic and acidic residues; it reads SELKSTEQIR.

The protein belongs to the DEAD box helicase family. DDX54/DBP10 subfamily. In terms of assembly, interacts with RRP1 and associates with pre-ribosomal particles.

The protein resides in the nucleus. Its subcellular location is the nucleolus. It carries out the reaction ATP + H2O = ADP + phosphate + H(+). In terms of biological role, ATP-binding RNA helicase involved in the biogenesis of 60S ribosomal subunits and is required for the normal formation of 25S and 5.8S rRNAs. This Saccharomyces cerevisiae (strain ATCC 204508 / S288c) (Baker's yeast) protein is ATP-dependent RNA helicase DBP10 (DBP10).